Consider the following 105-residue polypeptide: Protein SMALL AUXIN UP-REGULATED RNA 16 (105 aa).

Belongs to the ARG7 family. As to expression, expressed in etiolated hypocotyls, cotyledons, leaves, flowers and siliques.

It is found in the cell membrane. Provide a mechanistic link between auxin and plasma membrane H(+)-ATPases (PM H(+)-ATPases, e.g. AHA1 and AHA2), and triggers PM H(+)-ATPases activity by promoting phosphorylation of their C-terminal autoinhibitory domain as a result of PP2C-D subfamily of type 2C phosphatases inhibition, thus leading to the acidification of the apoplast and the facilitation of solutes and water uptake to drive cell expansion. Triggers plant growth probably by promoting cell elongation. Regulates branch angles and bending. The protein is Protein SMALL AUXIN UP-REGULATED RNA 16 of Arabidopsis thaliana (Mouse-ear cress).